We begin with the raw amino-acid sequence, 330 residues long: DNA-directed RNA polymerase subunit alpha (330 aa).

The tract at residues 1–235 (MVREKVKVST…DLFIHFLHAK (235 aa)) is alpha N-terminal domain (alpha-NTD). The tract at residues 270-330 (IALKYIFIDQ…KQILGILEKK (61 aa)) is alpha C-terminal domain (alpha-CTD).

This sequence belongs to the RNA polymerase alpha chain family. In terms of assembly, in plastids the minimal PEP RNA polymerase catalytic core is composed of four subunits: alpha, beta, beta', and beta''. When a (nuclear-encoded) sigma factor is associated with the core the holoenzyme is formed, which can initiate transcription.

It localises to the plastid. The protein resides in the chloroplast. It carries out the reaction RNA(n) + a ribonucleoside 5'-triphosphate = RNA(n+1) + diphosphate. Functionally, DNA-dependent RNA polymerase catalyzes the transcription of DNA into RNA using the four ribonucleoside triphosphates as substrates. The polypeptide is DNA-directed RNA polymerase subunit alpha (rpoA) (Gossypium barbadense (Sea Island cotton)).